The chain runs to 130 residues: Probable 4-amino-4-deoxy-L-arabinose-phosphoundecaprenol flippase subunit ArnF (130 aa).

The Cytoplasmic segment spans residues 1–4 (MRGY). The helical transmembrane segment at 5-25 (AWGAASVLLVTLAQLLMKWGM) threads the bilayer. Over 26–47 (AQIPLMSFADVTLNLFMQYWLP) the chain is Periplasmic. A helical transmembrane segment spans residues 48–68 (LVVVSGGIFGYALSMLCWFFA). Over 69–77 (LHHLPLNRA) the chain is Cytoplasmic. A helical transmembrane segment spans residues 78 to 98 (YPLLSVSYALVYLAAVILPWF). Residue Asn99 is a topological domain, periplasmic. Residues 100–120 (ESATLLKTLGTLFILFGVWLI) traverse the membrane as a helical segment. The Cytoplasmic portion of the chain corresponds to 121 to 130 (NSQAKVKTPQ).

This sequence belongs to the ArnF family. As to quaternary structure, heterodimer of ArnE and ArnF.

The protein localises to the cell inner membrane. The protein operates within bacterial outer membrane biogenesis; lipopolysaccharide biosynthesis. In terms of biological role, translocates 4-amino-4-deoxy-L-arabinose-phosphoundecaprenol (alpha-L-Ara4N-phosphoundecaprenol) from the cytoplasmic to the periplasmic side of the inner membrane. The chain is Probable 4-amino-4-deoxy-L-arabinose-phosphoundecaprenol flippase subunit ArnF from Serratia proteamaculans (strain 568).